Here is a 186-residue protein sequence, read N- to C-terminus: Elongation factor P (186 aa).

It belongs to the elongation factor P family.

It localises to the cytoplasm. Its pathway is protein biosynthesis; polypeptide chain elongation. Involved in peptide bond synthesis. Stimulates efficient translation and peptide-bond synthesis on native or reconstituted 70S ribosomes in vitro. Probably functions indirectly by altering the affinity of the ribosome for aminoacyl-tRNA, thus increasing their reactivity as acceptors for peptidyl transferase. This Prochlorococcus marinus (strain MIT 9211) protein is Elongation factor P.